We begin with the raw amino-acid sequence, 367 residues long: Peroxidase 1 (367 aa).

An N-terminal signal peptide occupies residues 1–33; it reads MAKESKLTAGVAAALTVVAACALCLLLPATARA. Glutamine 34 carries the post-translational modification Pyrrolidone carboxylic acid. 4 cysteine pairs are disulfide-bonded: cysteine 44–cysteine 125, cysteine 77–cysteine 82, cysteine 131–cysteine 335, and cysteine 209–cysteine 244. Histidine 75 acts as the Proton acceptor in catalysis. Ca(2+) is bound by residues aspartate 76, valine 79, glycine 81, aspartate 83, and serine 85. N-linked (GlcNAc...) asparagine glycosylation is present at asparagine 164. Proline 172 is a substrate binding site. Histidine 202 lines the heme b pocket. Threonine 203 is a Ca(2+) binding site. Residues asparagine 218 and asparagine 247 are each glycosylated (N-linked (GlcNAc...) asparagine). Residues aspartate 259, threonine 262, and aspartate 267 each coordinate Ca(2+). Asparagine 303 carries N-linked (GlcNAc...) asparagine glycosylation.

It belongs to the peroxidase family. Classical plant (class III) peroxidase subfamily. The cofactor is heme b. It depends on Ca(2+) as a cofactor. In terms of tissue distribution, expressed in the root tip meristems.

It localises to the secreted. It is found in the vacuole. It carries out the reaction 2 a phenolic donor + H2O2 = 2 a phenolic radical donor + 2 H2O. Removal of H(2)O(2), oxidation of toxic reductants, biosynthesis and degradation of lignin, suberization, auxin catabolism, response to environmental stresses such as wounding, pathogen attack and oxidative stress. These functions might be dependent on each isozyme/isoform in each plant tissue. The protein is Peroxidase 1 (PER1) of Zea mays (Maize).